A 134-amino-acid chain; its full sequence is Large ribosomal subunit protein uL22 (134 aa).

Belongs to the universal ribosomal protein uL22 family. Part of the 50S ribosomal subunit.

Its function is as follows. This protein binds specifically to 23S rRNA; its binding is stimulated by other ribosomal proteins, e.g. L4, L17, and L20. It is important during the early stages of 50S assembly. It makes multiple contacts with different domains of the 23S rRNA in the assembled 50S subunit and ribosome. The globular domain of the protein is located near the polypeptide exit tunnel on the outside of the subunit, while an extended beta-hairpin is found that lines the wall of the exit tunnel in the center of the 70S ribosome. This chain is Large ribosomal subunit protein uL22, found in Rhodococcus erythropolis (strain PR4 / NBRC 100887).